The sequence spans 505 residues: 2,3-bisphosphoglycerate-independent phosphoglycerate mutase (505 aa).

Residues Asp-12 and Ser-62 each coordinate Mn(2+). The active-site Phosphoserine intermediate is Ser-62. Substrate is bound by residues His-123, 153-154 (RD), Arg-185, Arg-191, 257-260 (RPDR), and Lys-330. Mn(2+) contacts are provided by Asp-397, His-401, Asp-438, His-439, and His-456.

The protein belongs to the BPG-independent phosphoglycerate mutase family. Monomer. Mn(2+) serves as cofactor.

The enzyme catalyses (2R)-2-phosphoglycerate = (2R)-3-phosphoglycerate. It participates in carbohydrate degradation; glycolysis; pyruvate from D-glyceraldehyde 3-phosphate: step 3/5. Its function is as follows. Catalyzes the interconversion of 2-phosphoglycerate and 3-phosphoglycerate. This Staphylococcus saprophyticus subsp. saprophyticus (strain ATCC 15305 / DSM 20229 / NCIMB 8711 / NCTC 7292 / S-41) protein is 2,3-bisphosphoglycerate-independent phosphoglycerate mutase.